The following is a 329-amino-acid chain: tRNA(Ile)-lysidine synthase, chloroplastic (329 aa).

32–37 contributes to the ATP binding site; it reads SGGQDS.

The protein belongs to the tRNA(Ile)-lysidine synthase family.

The protein resides in the plastid. The protein localises to the chloroplast. The catalysed reaction is cytidine(34) in tRNA(Ile2) + L-lysine + ATP = lysidine(34) in tRNA(Ile2) + AMP + diphosphate + H(+). Ligates lysine onto the cytidine present at position 34 of the AUA codon-specific tRNA(Ile) that contains the anticodon CAU, in an ATP-dependent manner. Cytidine is converted to lysidine, thus changing the amino acid specificity of the tRNA from methionine to isoleucine. This chain is tRNA(Ile)-lysidine synthase, chloroplastic, found in Pyropia yezoensis (Susabi-nori).